A 428-amino-acid chain; its full sequence is 47 kDa outer membrane protein (428 aa).

An N-terminal signal peptide occupies residues 1–25 (MAKTSKFTQTLLASALAVVAGSASA).

Belongs to the OmpP1/FadL family.

It localises to the cell outer membrane. This is 47 kDa outer membrane protein from Pasteurella multocida (strain Pm70).